We begin with the raw amino-acid sequence, 332 residues long: Glycerol-3-phosphate dehydrogenase [NAD(P)+] (332 aa).

NADPH contacts are provided by Ser-11, Trp-12, Lys-32, and Lys-106. Lys-106, Gly-137, and Ser-139 together coordinate sn-glycerol 3-phosphate. Ala-141 lines the NADPH pocket. Residues Lys-192, Asp-245, Ser-255, Arg-256, and Asn-257 each contribute to the sn-glycerol 3-phosphate site. The Proton acceptor role is filled by Lys-192. Arg-256 contacts NADPH. 2 residues coordinate NADPH: Val-280 and Glu-282.

Belongs to the NAD-dependent glycerol-3-phosphate dehydrogenase family.

It is found in the cytoplasm. It carries out the reaction sn-glycerol 3-phosphate + NAD(+) = dihydroxyacetone phosphate + NADH + H(+). It catalyses the reaction sn-glycerol 3-phosphate + NADP(+) = dihydroxyacetone phosphate + NADPH + H(+). It functions in the pathway membrane lipid metabolism; glycerophospholipid metabolism. Its function is as follows. Catalyzes the reduction of the glycolytic intermediate dihydroxyacetone phosphate (DHAP) to sn-glycerol 3-phosphate (G3P), the key precursor for phospholipid synthesis. This chain is Glycerol-3-phosphate dehydrogenase [NAD(P)+], found in Macrococcus caseolyticus (strain JCSC5402) (Macrococcoides caseolyticum).